Here is a 291-residue protein sequence, read N- to C-terminus: 4-hydroxy-tetrahydrodipicolinate synthase (291 aa).

Pyruvate is bound at residue Thr-45. Catalysis depends on Tyr-133, which acts as the Proton donor/acceptor. Lys-161 serves as the catalytic Schiff-base intermediate with substrate. Ile-203 lines the pyruvate pocket.

The protein belongs to the DapA family. As to quaternary structure, homotetramer; dimer of dimers.

Its subcellular location is the cytoplasm. It carries out the reaction L-aspartate 4-semialdehyde + pyruvate = (2S,4S)-4-hydroxy-2,3,4,5-tetrahydrodipicolinate + H2O + H(+). It participates in amino-acid biosynthesis; L-lysine biosynthesis via DAP pathway; (S)-tetrahydrodipicolinate from L-aspartate: step 3/4. Its function is as follows. Catalyzes the condensation of (S)-aspartate-beta-semialdehyde [(S)-ASA] and pyruvate to 4-hydroxy-tetrahydrodipicolinate (HTPA). The sequence is that of 4-hydroxy-tetrahydrodipicolinate synthase from Neisseria meningitidis serogroup C / serotype 2a (strain ATCC 700532 / DSM 15464 / FAM18).